Consider the following 412-residue polypeptide: Gamma-glutamyl phosphate reductase (412 aa).

Belongs to the gamma-glutamyl phosphate reductase family.

The protein localises to the cytoplasm. The catalysed reaction is L-glutamate 5-semialdehyde + phosphate + NADP(+) = L-glutamyl 5-phosphate + NADPH + H(+). The protein operates within amino-acid biosynthesis; L-proline biosynthesis; L-glutamate 5-semialdehyde from L-glutamate: step 2/2. Catalyzes the NADPH-dependent reduction of L-glutamate 5-phosphate into L-glutamate 5-semialdehyde and phosphate. The product spontaneously undergoes cyclization to form 1-pyrroline-5-carboxylate. The chain is Gamma-glutamyl phosphate reductase from Nitratiruptor sp. (strain SB155-2).